Reading from the N-terminus, the 284-residue chain is Protein-S-isoprenylcysteine O-methyltransferase (284 aa).

At 1 to 16 (MAGCAARAPPGSEARL) the chain is on the cytoplasmic side. The chain crosses the membrane as a helical span at residues 17–33 (SLATFLLGASVLALPLL). Over 34 to 41 (TRAGLQGR) the chain is Lumenal. The chain crosses the membrane as a helical span at residues 42 to 59 (TGLALYVAGLNALLLLLY). At 60-69 (RPPRYQIAIR) the chain is on the cytoplasmic side. A helical membrane pass occupies residues 70-87 (ACFLGFVFGCGTLLSFSQ). Residues 88-92 (SSWSH) are Lumenal-facing. The helical transmembrane segment at 93-112 (FGWYMCSLSLFHYSEYLVTA) threads the bilayer. Residues 113–131 (VNNPKSLSLDSFLLNHSLE) are Cytoplasmic-facing. Residues 132-149 (YTVAALSSWLEFTLENIF) traverse the membrane as a helical segment. Residues 150 to 154 (WPELK) lie on the Lumenal side of the membrane. Residues 155–174 (QITWLSVTGLLMVVFGECLR) form a helical membrane-spanning segment. The Cytoplasmic portion of the chain corresponds to 175–212 (KAAMFTAGSNFNHVVQNEKSDTHTLVTSGVYAWFRHPS). Residues Gln-190, 197–200 (HTLV), Tyr-205, and 210–213 (HPSY) each bind S-adenosyl-L-methionine. The helical transmembrane segment at 213-228 (YVGWFYWSIGTQVMLC) threads the bilayer. Asn-229 is a topological domain (lumenal). A helical membrane pass occupies residues 230 to 244 (PICGVSYALTVWRFF). Residues 245-284 (RDRTEEEEISLIHFFGEEYLEYKKRVPTGLPFIKGVKVDL) lie on the Cytoplasmic side of the membrane. Residue Arg-247 coordinates substrate. S-adenosyl-L-methionine is bound at residue Glu-251.

It belongs to the class VI-like SAM-binding methyltransferase superfamily. Isoprenylcysteine carboxyl methyltransferase family. Ubiquitously expressed. Expressed at higher levels in the cerebellum and putamen than in other brain regions. Abundant expression seen in the Purkinje cells and pontine neurons.

Its subcellular location is the endoplasmic reticulum membrane. The catalysed reaction is [protein]-C-terminal S-[(2E,6E)-farnesyl]-L-cysteine + S-adenosyl-L-methionine = [protein]-C-terminal S-[(2E,6E)-farnesyl]-L-cysteine methyl ester + S-adenosyl-L-homocysteine. Competitively inhibited by N-acetyl-S-trans,trans-farnesyl-l-cysteine (AFC). Catalyzes the post-translational methylation of isoprenylated C-terminal cysteine residues. In Homo sapiens (Human), this protein is Protein-S-isoprenylcysteine O-methyltransferase (ICMT).